Reading from the N-terminus, the 200-residue chain is GTP cyclohydrolase-2 (200 aa).

50–54 (RVHSE) provides a ligand contact to GTP. Zn(2+) is bound by residues C55, C66, and C68. GTP contacts are provided by residues Q71, 93-95 (EGR), and T115. D127 serves as the catalytic Proton acceptor. R129 serves as the catalytic Nucleophile. Residues T150 and K155 each contribute to the GTP site.

It belongs to the GTP cyclohydrolase II family. Requires Zn(2+) as cofactor.

The enzyme catalyses GTP + 4 H2O = 2,5-diamino-6-hydroxy-4-(5-phosphoribosylamino)-pyrimidine + formate + 2 phosphate + 3 H(+). It participates in cofactor biosynthesis; riboflavin biosynthesis; 5-amino-6-(D-ribitylamino)uracil from GTP: step 1/4. Functionally, catalyzes the conversion of GTP to 2,5-diamino-6-ribosylamino-4(3H)-pyrimidinone 5'-phosphate (DARP), formate and pyrophosphate. This is GTP cyclohydrolase-2 from Acinetobacter baumannii (strain AB307-0294).